The chain runs to 187 residues: DNA-3-methyladenine glycosylase 1 (187 aa).

Zn(2+) is bound by residues C4, H17, H175, and C179.

It catalyses the reaction Hydrolysis of alkylated DNA, releasing 3-methyladenine.. Activity is controlled by product inhibition. Hydrolysis of the deoxyribose N-glycosidic bond to excise 3-methyladenine from the damaged DNA polymer formed by alkylation lesions. This Escherichia coli (strain K12) protein is DNA-3-methyladenine glycosylase 1.